A 171-amino-acid polypeptide reads, in one-letter code: Large ribosomal subunit protein uL10 (171 aa).

This sequence belongs to the universal ribosomal protein uL10 family. As to quaternary structure, part of the ribosomal stalk of the 50S ribosomal subunit. The N-terminus interacts with L11 and the large rRNA to form the base of the stalk. The C-terminus forms an elongated spine to which L12 dimers bind in a sequential fashion forming a multimeric L10(L12)X complex.

In terms of biological role, forms part of the ribosomal stalk, playing a central role in the interaction of the ribosome with GTP-bound translation factors. The chain is Large ribosomal subunit protein uL10 from Corynebacterium diphtheriae (strain ATCC 700971 / NCTC 13129 / Biotype gravis).